A 193-amino-acid chain; its full sequence is Outer-membrane lipoprotein LolB (193 aa).

An N-terminal signal peptide occupies residues Met-1–Ala-21. Cys-22 carries the N-palmitoyl cysteine lipid modification. The S-diacylglycerol cysteine moiety is linked to residue Cys-22.

It belongs to the LolB family. In terms of assembly, monomer.

Its subcellular location is the cell outer membrane. Its function is as follows. Plays a critical role in the incorporation of lipoproteins in the outer membrane after they are released by the LolA protein. In Azoarcus sp. (strain BH72), this protein is Outer-membrane lipoprotein LolB.